Reading from the N-terminus, the 831-residue chain is Phenylalanine--tRNA ligase beta subunit (831 aa).

A tRNA-binding domain is found at 42–157 (ADISGPIVVG…GFAEPGTKAD (116 aa)). The region spanning 408–483 (VPREPIVVRA…RNEGYENIPA (76 aa)) is the B5 domain. Mg(2+) is bound by residues Asp-461, Asp-467, Glu-470, and Glu-471. Residues 737 to 830 (STYPVATQDV…AAERTGAVLR (94 aa)) form the FDX-ACB domain.

It belongs to the phenylalanyl-tRNA synthetase beta subunit family. Type 1 subfamily. Tetramer of two alpha and two beta subunits. It depends on Mg(2+) as a cofactor.

It localises to the cytoplasm. The enzyme catalyses tRNA(Phe) + L-phenylalanine + ATP = L-phenylalanyl-tRNA(Phe) + AMP + diphosphate + H(+). In Thermobifida fusca (strain YX), this protein is Phenylalanine--tRNA ligase beta subunit.